Here is a 236-residue protein sequence, read N- to C-terminus: 2,3,4,5-tetrahydropyridine-2,6-dicarboxylate N-acetyltransferase (236 aa).

Belongs to the transferase hexapeptide repeat family. DapH subfamily.

It carries out the reaction (S)-2,3,4,5-tetrahydrodipicolinate + acetyl-CoA + H2O = L-2-acetamido-6-oxoheptanedioate + CoA. The protein operates within amino-acid biosynthesis; L-lysine biosynthesis via DAP pathway; LL-2,6-diaminopimelate from (S)-tetrahydrodipicolinate (acetylase route): step 1/3. Its function is as follows. Catalyzes the transfer of an acetyl group from acetyl-CoA to tetrahydrodipicolinate. This chain is 2,3,4,5-tetrahydropyridine-2,6-dicarboxylate N-acetyltransferase, found in Clostridium botulinum (strain Okra / Type B1).